The sequence spans 376 residues: tRNA-specific 2-thiouridylase MnmA (376 aa).

ATP is bound by residues 14 to 21 and M40; that span reads GMSGGVDS. Residues 100–102 are interaction with target base in tRNA; that stretch reads NPD. C105 (nucleophile) is an active-site residue. An intrachain disulfide couples C105 to C202. G129 contributes to the ATP binding site. The tract at residues 152-154 is interaction with tRNA; that stretch reads KDQ. The Cysteine persulfide intermediate role is filled by C202. The tract at residues 315 to 316 is interaction with tRNA; sequence RY.

This sequence belongs to the MnmA/TRMU family.

It is found in the cytoplasm. The enzyme catalyses S-sulfanyl-L-cysteinyl-[protein] + uridine(34) in tRNA + AH2 + ATP = 2-thiouridine(34) in tRNA + L-cysteinyl-[protein] + A + AMP + diphosphate + H(+). Its function is as follows. Catalyzes the 2-thiolation of uridine at the wobble position (U34) of tRNA, leading to the formation of s(2)U34. The sequence is that of tRNA-specific 2-thiouridylase MnmA from Lactococcus lactis subsp. lactis (strain IL1403) (Streptococcus lactis).